A 96-amino-acid polypeptide reads, in one-letter code: RNA-binding protein Hfq (96 aa).

The Sm domain occupies aspartate 9 to valine 68.

The protein belongs to the Hfq family. Homohexamer.

Its function is as follows. RNA chaperone that binds small regulatory RNA (sRNAs) and mRNAs to facilitate mRNA translational regulation in response to envelope stress, environmental stress and changes in metabolite concentrations. Also binds with high specificity to tRNAs. The sequence is that of RNA-binding protein Hfq from Histophilus somni (strain 129Pt) (Haemophilus somnus).